The chain runs to 625 residues: Serine/threonine-protein kinase PknB (625 aa).

Residues 1-331 (MTTPQHLSDR…KQRSTSVARW (331 aa)) lie on the Cytoplasmic side of the membrane. A Protein kinase domain is found at 11-274 (YELGEILGFG…TAAEMRADLI (264 aa)). Residues 17 to 25 (LGFGGMSEV), K40, and 93 to 95 (EYV) contribute to the ATP site. D138 acts as the Proton acceptor in catalysis. Residues 140 to 143 (KPAN) and D156 each bind ATP. Mg(2+) contacts are provided by N143 and D156. The residue at position 169 (S169) is a Phosphoserine; by autocatalysis. Phosphothreonine; by autocatalysis is present on residues T171, T173, and T294. Residue S295 is modified to Phosphoserine; by autocatalysis. Positions 302 to 321 (ADRAGAATQDMPVPRPAGYS) are disordered. T309 is subject to Phosphothreonine; by autocatalysis. Residues 332–352 (LIAVAVLAVLTVVVTVAINMV) form a helical membrane-spanning segment. The Extracellular segment spans residues 353–625 (GGNPRNVQVP…DAKITLSFAA (273 aa)). PASTA domains follow at residues 355–421 (NPRN…NVST), 422–489 (GPEQ…VVGA), 490–556 (GPED…RVSK), and 557–625 (GNQF…SFAA). A disordered region spans residues 591 to 612 (DVRDSGQRTNAVVTQSPSAGTP). The segment covering 597–611 (QRTNAVVTQSPSAGT) has biased composition (polar residues).

It belongs to the protein kinase superfamily. Ser/Thr protein kinase family. Homodimer. Autophosphorylated. Dephosphorylated by PstP.

Its subcellular location is the cell membrane. The catalysed reaction is L-seryl-[protein] + ATP = O-phospho-L-seryl-[protein] + ADP + H(+). It carries out the reaction L-threonyl-[protein] + ATP = O-phospho-L-threonyl-[protein] + ADP + H(+). With respect to regulation, by K-252a. Its function is as follows. Protein kinase that regulates many aspects of mycobacterial physiology. Is a key component of a signal transduction pathway that regulates cell growth, cell shape and cell division via phosphorylation of target proteins. Probably phosphorylates RseA. In Mycolicibacterium smegmatis (strain ATCC 700084 / mc(2)155) (Mycobacterium smegmatis), this protein is Serine/threonine-protein kinase PknB (pknB).